Consider the following 628-residue polypeptide: Dual specificity testis-specific protein kinase 1 (628 aa).

Positions 1 to 35 (MAGERPPLRGPGPGETPVEGPGGAGGGPGRGRPSS) are disordered. The segment covering 20–30 (GPGGAGGGPGR) has biased composition (gly residues). The Protein kinase domain maps to 52–310 (FDCAEKIGAG…EITQHLEQIL (259 aa)). ATP contacts are provided by residues 58 to 66 (IGAGFFSEV) and K81. Catalysis depends on D170, which acts as the Proton acceptor. S215 is modified (phosphoserine; by autocatalysis). Disordered stretches follow at residues 330-376 (TYNQ…DNLT), 424-490 (PESL…QLPL), and 538-568 (RAQHSLPRAAALERTEPSPPPSAPREQEEGL). R338 carries the post-translational modification Omega-N-methylarginine. Residues 348–357 (SDPRLSRSRS) show a composition bias toward basic and acidic residues. Residues 421–526 (VASPESLVQP…NNNPPAVVVN (106 aa)) form a required for interaction with YWHAB region. At S439 the chain carries Phosphoserine. Residues 478–487 (EPEPPGPAPQ) are compositionally biased toward pro residues. Residues 529–626 (QGWAREPWNR…PTPSLQLPGA (98 aa)) are required for interaction with PARVA. Residues 529-628 (QGWAREPWNR…PSLQLPGARS (100 aa)) are required for interaction with SPRED1 and SPRY2. Required for TESK1-mediated dephosphorylation of SPRY2 and SPRY2 inhibition of ERK phosphorylation.

Belongs to the protein kinase superfamily. TKL Ser/Thr protein kinase family. In terms of assembly, interacts (via both C- and N-termini) with SPRY4 (via C-terminus); the interaction inhibits TESK1 kinase activity. Interacts with TAOK1; the interaction inhibits TAOK1 kinase activity. Interacts (via C-terminus) with SPRED1 (via C-terminus); the interaction inhibits TESK1 kinase activity. Interacts (via C-terminus) with PARVA/PARVIN (via C-terminus); the interaction inhibits TESK1 kinase activity. Interacts with YWHAB/14-3-3 beta; the interaction is dependent on the phosphorylation of TESK1 Ser-439 and inhibits TESK1 kinase activity. Interacts with SPRY1, SPRY3 and SPRED2. Interacts (via C-terminus) with SPRY2 (via C-terminus); the interaction disrupts SPRY2 interaction with PPP2CA/PP2A-C, possibly by vesicular sequestration of SPRY2. Therefore dephosphorylation of SPRY2 by the serine/threonine-protein phosphatase 2A (PP2A) holoenzyme is lost, inhibiting its interaction with GRB2. The cofactor is Mg(2+). Requires Mn(2+) as cofactor. Post-translationally, autophosphorylated on serine and tyrosine residues. In terms of tissue distribution, weakly expressed in sciatic nerves (at protein level). Highly expressed in testicular germ cells. Expressed at low levels in brain, lung, heart, liver and kidney.

The protein resides in the cytoplasm. The protein localises to the perinuclear region. It is found in the cytoskeleton. It localises to the microtubule organizing center. Its subcellular location is the centrosome. The protein resides in the cell projection. The protein localises to the lamellipodium. It catalyses the reaction L-seryl-[protein] + ATP = O-phospho-L-seryl-[protein] + ADP + H(+). The catalysed reaction is L-threonyl-[protein] + ATP = O-phospho-L-threonyl-[protein] + ADP + H(+). The enzyme catalyses L-tyrosyl-[protein] + ATP = O-phospho-L-tyrosyl-[protein] + ADP + H(+). Activated by autophosphorylation on Ser-215. Kinase activity is inhibited by SPRED1. Its function is as follows. Dual specificity protein kinase activity catalyzing autophosphorylation and phosphorylation of exogenous substrates on both serine/threonine and tyrosine residues. Regulates the cellular cytoskeleton by enhancing actin stress fiber formation via phosphorylation of cofilin and by preventing microtubule breakdown via inhibition of TAOK1/MARKK kinase activity. Inhibits podocyte motility via regulation of actin cytoskeletal dynamics and phosphorylation of CFL1. Positively regulates integrin-mediated cell spreading, via phosphorylation of cofilin. Suppresses ciliogenesis via multiple pathways; phosphorylation of CFL1, suppression of ciliary vesicle directional trafficking to the ciliary base, and by facilitating YAP1 nuclear localization where it acts as a transcriptional corepressor of the TEAD4 target genes AURKA and PLK1. Probably plays a central role at and after the meiotic phase of spermatogenesis. The sequence is that of Dual specificity testis-specific protein kinase 1 (Tesk1) from Rattus norvegicus (Rat).